Consider the following 79-residue polypeptide: Putative transmembrane protein ORF17 (79 aa).

2 consecutive transmembrane segments (helical) span residues 8-28 (LMIY…IMYY) and 50-70 (VFVM…TTTI).

It localises to the host membrane. This is Putative transmembrane protein ORF17 from Haloarcula hispanica (His1V).